A 271-amino-acid polypeptide reads, in one-letter code: Acyl-[acyl-carrier-protein]--UDP-N-acetylglucosamine O-acyltransferase (271 aa).

This sequence belongs to the transferase hexapeptide repeat family. LpxA subfamily. In terms of assembly, homotrimer.

It is found in the cytoplasm. It carries out the reaction a (3R)-hydroxyacyl-[ACP] + UDP-N-acetyl-alpha-D-glucosamine = a UDP-3-O-[(3R)-3-hydroxyacyl]-N-acetyl-alpha-D-glucosamine + holo-[ACP]. It functions in the pathway glycolipid biosynthesis; lipid IV(A) biosynthesis; lipid IV(A) from (3R)-3-hydroxytetradecanoyl-[acyl-carrier-protein] and UDP-N-acetyl-alpha-D-glucosamine: step 1/6. Involved in the biosynthesis of lipid A, a phosphorylated glycolipid that anchors the lipopolysaccharide to the outer membrane of the cell. The sequence is that of Acyl-[acyl-carrier-protein]--UDP-N-acetylglucosamine O-acyltransferase from Agrobacterium fabrum (strain C58 / ATCC 33970) (Agrobacterium tumefaciens (strain C58)).